We begin with the raw amino-acid sequence, 504 residues long: Glucosaminyl-phosphatidylinositol-acyltransferase PIGW (504 aa).

Over 1-21 (MSEKQMKEAFVSNLNGTTVLE) the chain is Lumenal. The N-linked (GlcNAc...) asparagine glycan is linked to Asn-15. A helical membrane pass occupies residues 22 to 42 (ITQGLCFPAFCILCRGFLIIF). Topologically, residues 43-56 (SQYLCSFSPTWKTR) are cytoplasmic. A helical membrane pass occupies residues 57 to 75 (FLTDFVVLIVPMVATLTIW). Residues 76–81 (ASFILL) lie on the Lumenal side of the membrane. The chain crosses the membrane as a helical span at residues 82–98 (ELLGVIIFGAGLLYQIY). The Cytoplasmic portion of the chain corresponds to 99–131 (RRRTCYARLPFLKILEKFLNISLESEYNPAISC). Residues 132-152 (FRVITSAFTAIAILAVDFPLF) traverse the membrane as a helical segment. Over 153–162 (PRRFAKTELY) the chain is Lumenal. Residues 163-183 (GTGAMDFGVGGFVFGSAMVCL) traverse the membrane as a helical segment. The Cytoplasmic portion of the chain corresponds to 184 to 202 (EVRRRKYMEGSKLHYFTNS). A helical membrane pass occupies residues 203–223 (LYSVWPLVFLGIGRLAIIKSI). The Lumenal segment spans residues 224–237 (GYQEHLTEYGVHWN). Residues 238–258 (FFFTIIVVKLITPLLLIIFPL) traverse the membrane as a helical segment. Topologically, residues 259–260 (NK) are cytoplasmic. A helical transmembrane segment spans residues 261 to 281 (SWIIALGITVLYQLALDFTSL). The Lumenal portion of the chain corresponds to 282 to 305 (KRLILYGTDGSGTRVGLLNANREG). Residues 306–326 (IISTLGYVAIHMAGVQTGLYM) traverse the membrane as a helical segment. Topologically, residues 327 to 338 (HKNRSHIKDLIK) are cytoplasmic. The helical transmembrane segment at 339-359 (VACFLLLAAISLFISLYVVQV) threads the bilayer. At 360–370 (NVEAVSRRMAN) the chain is on the lumenal side. Residues 371–391 (LAFCIWIVASSLILLSSLLLG) traverse the membrane as a helical segment. Residues 392 to 448 (DIILSFAKFLIKGALVPCSWKLIQSPVTNKKHSESLVPEAERMEPSLCLITALNRKQ) are Cytoplasmic-facing. Position 416 is a phosphoserine (Ser-416). A helical membrane pass occupies residues 449-469 (LIFFLLSNITTGLINLMVDTL). Residues 470–473 (HSST) lie on the Lumenal side of the membrane. The chain crosses the membrane as a helical span at residues 474–494 (LWALFVVNLYMFSNCLIVYVL). Residues 495–504 (YLQDKTVQFW) are Cytoplasmic-facing.

This sequence belongs to the PIGW family.

It is found in the endoplasmic reticulum membrane. The protein operates within glycolipid biosynthesis; glycosylphosphatidylinositol-anchor biosynthesis. In terms of biological role, acyltransferase that catalyzes the acyl transfer from an acyl-CoA at the 2-OH position of the inositol ring of glucosaminyl phosphatidylinositol (GlcN-PI) to generate glucosaminyl acyl phosphatidylinositol (GlcN-(acyl)PI) and participates in the fourth step of GPI-anchor biosynthesis. Required for the transport of GPI-anchored proteins to the plasma membrane. Acetylation during GPI-anchor biosynthesis is not essential for the subsequent mannosylation and is usually removed soon after the attachment of GPIs to proteins. The sequence is that of Glucosaminyl-phosphatidylinositol-acyltransferase PIGW from Homo sapiens (Human).